Reading from the N-terminus, the 397-residue chain is Protein shisa-8 (397 aa).

An N-terminal signal peptide occupies residues 1–38; sequence MARAGARGLLGGRRPPGLRLALALRLALLLARPPSGRA. Topologically, residues 39-138 are extracellular; the sequence is GAPEAQGPAA…APRDPGRERS (100 aa). A glycan (N-linked (GlcNAc...) asparagine) is linked at N75. Positions 117-136 are disordered; that stretch reads TGRPPARARDTAAPRDPGRE. The segment covering 123 to 136 has biased composition (basic and acidic residues); it reads RARDTAAPRDPGRE. A helical transmembrane segment spans residues 139-159; it reads HTAVYAVCGVAALLVLAGIGA. At 160-397 the chain is on the cytoplasmic side; it reads RLGLERAHSP…RTNSKTEVTV (238 aa). 2 disordered regions span residues 182-250 and 281-303; these read LLKQ…GGSL and FPAL…PDLP. Composition is skewed to pro residues over residues 188–197 and 288–303; these read PQEPLPPTLG and PRQP…PDLP.

It belongs to the shisa family. Interacts with AMPAR subunits GRIA1 and GRIA2.

It is found in the membrane. May regulate trafficking and current kinetics of AMPA-type glutamate receptor (AMPAR) at synapses. This is Protein shisa-8 from Homo sapiens (Human).